The following is a 186-amino-acid chain: Ribosome-recycling factor (186 aa).

It belongs to the RRF family.

It is found in the cytoplasm. Its function is as follows. Responsible for the release of ribosomes from messenger RNA at the termination of protein biosynthesis. May increase the efficiency of translation by recycling ribosomes from one round of translation to another. The sequence is that of Ribosome-recycling factor from Herminiimonas arsenicoxydans.